A 522-amino-acid chain; its full sequence is Sorting nexin-1 (522 aa).

A disordered region spans residues 1–144 (MASGGGGCSA…EEEEQEDQFD (144 aa)). Phosphoserine occurs at positions 32 and 39. Positions 35 to 45 (EAGDSDTEGED) are enriched in acidic residues. A phosphothreonine mark is found at T41 and T48. The span at 55-65 (KPQSPKKTTSL) shows a compositional bias: polar residues. A phosphoserine mark is found at S58 and S72. Residues 71 to 80 (GSKENGIHED) show a composition bias toward basic and acidic residues. The span at 98 to 125 (LDSTQNNQKTMPGKTLTSHSPQEATNSP) shows a compositional bias: polar residues. Residues 132 to 143 (EELEEEEQEDQF) are compositionally biased toward acidic residues. Residues 143 to 272 (FDLTVGITDP…EFLEKEELPR (130 aa)) form the PX domain. Positions 186, 188, and 214 each coordinate a 1,2-diacyl-sn-glycero-3-phospho-(1D-myo-inositol-3-phosphate). S188 is modified (phosphoserine). K237 bears the N6-acetyllysine mark. R238 contributes to the a 1,2-diacyl-sn-glycero-3-phospho-(1D-myo-inositol-3-phosphate) binding site. S280 carries the phosphoserine modification. Positions 281–298 (GAGLLKMFNKATDAVSKM) are membrane-binding amphipathic helix. Residues 302 to 522 (MNESDIWFEE…AFLPEAKAIS (221 aa)) form the BAR domain.

It belongs to the sorting nexin family. Predominantly forms heterodimers with BAR domain-containing sorting nexins SNX5, SNX6 and SNX32. Can self-associate to form homodimers. The heterodimers are proposed to self-assemble into helical arrays on the membrane to stabilize and expand local membrane curvature underlying endosomal tubule formation. Thought to be a component of the originally described retromer complex (also called SNX-BAR retromer) which is a pentamer containing the heterotrimeric retromer cargo-selective complex (CSC), also described as vacuolar protein sorting subcomplex (VPS) and a heterodimeric membrane-deforming subcomplex formed between SNX1 or SNX2 and SNX5 or SNX6 (also called SNX-BAR subcomplex); the respective CSC and SNX-BAR subcomplexes associate with low affinity. Interacts with SNX5, SNX6, SNX32, VPS26A, VPS29, VPS35, DRD5, DENND5A, KALRN, RHOG (GDP-bound form). The interaction with SNX2 is reported controversially. Interacts with DNAJC13; prevented by presence of HGS. Interacts with HGS.

The protein resides in the endosome membrane. It is found in the golgi apparatus. The protein localises to the trans-Golgi network membrane. Its subcellular location is the early endosome membrane. It localises to the cell projection. The protein resides in the lamellipodium. Involved in several stages of intracellular trafficking. Interacts with membranes containing phosphatidylinositol 3-phosphate (PtdIns(3P)) or phosphatidylinositol 3,5-bisphosphate (PtdIns(3,5)P2). Acts in part as component of the retromer membrane-deforming SNX-BAR subcomplex. The SNX-BAR retromer mediates retrograde transport of cargo proteins from endosomes to the trans-Golgi network (TGN) and is involved in endosome-to-plasma membrane transport for cargo protein recycling. The SNX-BAR subcomplex functions to deform the donor membrane into a tubular profile called endosome-to-TGN transport carrier (ETC). Can sense membrane curvature and has in vitro vesicle-to-membrane remodeling activity. Involved in retrograde endosome-to-TGN transport of lysosomal enzyme receptors (IGF2R, M6PR and SORT1). Plays a role in targeting ligand-activated EGFR to the lysosomes for degradation after endocytosis from the cell surface and release from the Golgi. Involvement in retromer-independent endocytic trafficking of P2RY1 and lysosomal degradation of protease-activated receptor-1/F2R. Promotes KALRN- and RHOG-dependent but retromer-independent membrane remodeling such as lamellipodium formation; the function is dependent on GEF activity of KALRN. Required for endocytosis of DRD5 upon agonist stimulation but not for basal receptor trafficking. This chain is Sorting nexin-1 (Snx1), found in Mus musculus (Mouse).